The following is a 249-amino-acid chain: Vitamin B12 import ATP-binding protein BtuD (249 aa).

The region spanning 1-233 (MSIVMQLQDV…PNLAQAYGMN (233 aa)) is the ABC transporter domain. 33–40 (GPNGAGKS) serves as a coordination point for ATP.

Belongs to the ABC transporter superfamily. Vitamin B12 importer (TC 3.A.1.13.1) family. As to quaternary structure, the complex is composed of two ATP-binding proteins (BtuD), two transmembrane proteins (BtuC) and a solute-binding protein (BtuF).

The protein localises to the cell inner membrane. The catalysed reaction is an R-cob(III)alamin(out) + ATP + H2O = an R-cob(III)alamin(in) + ADP + phosphate + H(+). Part of the ABC transporter complex BtuCDF involved in vitamin B12 import. Responsible for energy coupling to the transport system. In Escherichia coli (strain K12 / DH10B), this protein is Vitamin B12 import ATP-binding protein BtuD.